We begin with the raw amino-acid sequence, 250 residues long: NAD(P)H-quinone oxidoreductase subunit K, chloroplastic (250 aa).

[4Fe-4S] cluster is bound by residues Cys-61, Cys-62, Cys-126, and Cys-157.

This sequence belongs to the complex I 20 kDa subunit family. As to quaternary structure, NDH is composed of at least 16 different subunits, 5 of which are encoded in the nucleus. [4Fe-4S] cluster serves as cofactor.

The protein localises to the plastid. The protein resides in the chloroplast thylakoid membrane. The enzyme catalyses a plastoquinone + NADH + (n+1) H(+)(in) = a plastoquinol + NAD(+) + n H(+)(out). It catalyses the reaction a plastoquinone + NADPH + (n+1) H(+)(in) = a plastoquinol + NADP(+) + n H(+)(out). Its function is as follows. NDH shuttles electrons from NAD(P)H:plastoquinone, via FMN and iron-sulfur (Fe-S) centers, to quinones in the photosynthetic chain and possibly in a chloroplast respiratory chain. The immediate electron acceptor for the enzyme in this species is believed to be plastoquinone. Couples the redox reaction to proton translocation, and thus conserves the redox energy in a proton gradient. This Angiopteris evecta (Mule's foot fern) protein is NAD(P)H-quinone oxidoreductase subunit K, chloroplastic.